The primary structure comprises 319 residues: Transcription initiation factor IIB 6 (319 aa).

Basic and acidic residues predominate over residues 1-16 (MTDARMRSREQERTDE). Residues 1–33 (MTDARMRSREQERTDETESESTDGCPECGGLVV) form a disordered region. The segment at 21–51 (STDGCPECGGLVVNDEEHGESVCADCGLVVE) adopts a TFIIB-type zinc-finger fold. C25, C28, C43, and C46 together coordinate Zn(2+). A compositionally biased stretch (basic and acidic residues) spans 59–74 (PEWRAFDSKEKDEKSR). A disordered region spans residues 59–89 (PEWRAFDSKEKDEKSRVGAPTTNTMHDKGLS). 2 consecutive repeat copies span residues 137–220 (GEID…VREL) and 231–312 (SYVP…ELLE).

This sequence belongs to the TFIIB family.

Stabilizes TBP binding to an archaeal box-A promoter. Also responsible for recruiting RNA polymerase II to the pre-initiation complex (DNA-TBP-TFIIB). This is Transcription initiation factor IIB 6 from Halobacterium salinarum (strain ATCC 700922 / JCM 11081 / NRC-1) (Halobacterium halobium).